Here is a 77-residue protein sequence, read N- to C-terminus: Putative defensin-like protein 129 (77 aa).

The first 25 residues, M1–G25, serve as a signal peptide directing secretion. 4 disulfides stabilise this stretch: C28-C77, C37-C59, C42-C71, and C46-C73.

This sequence belongs to the DEFL family.

It is found in the secreted. The chain is Putative defensin-like protein 129 (LCR13) from Arabidopsis thaliana (Mouse-ear cress).